The primary structure comprises 152 residues: Deoxyuridine 5'-triphosphate nucleotidohydrolase (152 aa).

Substrate-binding positions include 71-73 (RSG), Asn-84, 88-90 (LID), and Met-98.

The protein belongs to the dUTPase family. It depends on Mg(2+) as a cofactor.

The catalysed reaction is dUTP + H2O = dUMP + diphosphate + H(+). It participates in pyrimidine metabolism; dUMP biosynthesis; dUMP from dCTP (dUTP route): step 2/2. Its function is as follows. This enzyme is involved in nucleotide metabolism: it produces dUMP, the immediate precursor of thymidine nucleotides and it decreases the intracellular concentration of dUTP so that uracil cannot be incorporated into DNA. The polypeptide is Deoxyuridine 5'-triphosphate nucleotidohydrolase (Salmonella agona (strain SL483)).